The primary structure comprises 325 residues: NADH-quinone oxidoreductase subunit H (325 aa).

8 consecutive transmembrane segments (helical) span residues 11–31 (ILLT…CGAF), 81–101 (FIFT…FAIV), 114–134 (IGIL…LFAG), 154–174 (VSYE…AGSF), 186–206 (MWNI…GVAV), 237–257 (FFVG…TLFF), 265–285 (LPSF…FILI), and 304–324 (ICLP…LYNA).

It belongs to the complex I subunit 1 family. NDH-1 is composed of 13 different subunits. Subunits NuoA, H, J, K, L, M, N constitute the membrane sector of the complex.

Its subcellular location is the cell inner membrane. It carries out the reaction a quinone + NADH + 5 H(+)(in) = a quinol + NAD(+) + 4 H(+)(out). NDH-1 shuttles electrons from NADH, via FMN and iron-sulfur (Fe-S) centers, to quinones in the respiratory chain. The immediate electron acceptor for the enzyme in this species is believed to be ubiquinone. Couples the redox reaction to proton translocation (for every two electrons transferred, four hydrogen ions are translocated across the cytoplasmic membrane), and thus conserves the redox energy in a proton gradient. This subunit may bind ubiquinone. The polypeptide is NADH-quinone oxidoreductase subunit H (Proteus mirabilis (strain HI4320)).